The sequence spans 241 residues: Probable septum site-determining protein MinC (241 aa).

It belongs to the MinC family. As to quaternary structure, interacts with MinD and FtsZ.

Its function is as follows. Cell division inhibitor that blocks the formation of polar Z ring septums. Rapidly oscillates between the poles of the cell to destabilize FtsZ filaments that have formed before they mature into polar Z rings. Prevents FtsZ polymerization. This Rhizobium rhizogenes (strain K84 / ATCC BAA-868) (Agrobacterium radiobacter) protein is Probable septum site-determining protein MinC.